Reading from the N-terminus, the 209-residue chain is Orotate phosphoribosyltransferase (209 aa).

5-phospho-alpha-D-ribose 1-diphosphate is bound by residues Arg-96, Lys-100, His-102, and 122–130 (EDLISTGGS). Ser-126 provides a ligand contact to orotate.

This sequence belongs to the purine/pyrimidine phosphoribosyltransferase family. PyrE subfamily. Homodimer. Mg(2+) is required as a cofactor.

It carries out the reaction orotidine 5'-phosphate + diphosphate = orotate + 5-phospho-alpha-D-ribose 1-diphosphate. The protein operates within pyrimidine metabolism; UMP biosynthesis via de novo pathway; UMP from orotate: step 1/2. Functionally, catalyzes the transfer of a ribosyl phosphate group from 5-phosphoribose 1-diphosphate to orotate, leading to the formation of orotidine monophosphate (OMP). This is Orotate phosphoribosyltransferase from Streptococcus mutans serotype c (strain ATCC 700610 / UA159).